Reading from the N-terminus, the 1937-residue chain is Myosin-8 (1937 aa).

The 50-residue stretch at 35–84 (DAKTSVFVAEPKESYVKSVIQSKDGGKVTVKTESGATLTVKEDQVFPMNP) folds into the Myosin N-terminal SH3-like domain. Phosphothreonine is present on residues Thr66 and Thr71. The 694-residue stretch at 88 to 781 (DKIEDMAMMT…LLGLLEEMRD (694 aa)) folds into the Myosin motor domain. N6,N6,N6-trimethyllysine is present on Lys132. Residue 181 to 188 (GESGAGKT) coordinates ATP. Residue Tyr389 is modified to Phosphotyrosine. Thr419 bears the Phosphothreonine mark. Tyr424 carries the post-translational modification Phosphotyrosine. Phosphoserine is present on Ser625. Residues 658–680 (LNKLMTNLRSTHPHFVRCIIPNE) form an actin-binding region. Pros-methylhistidine is present on His756. The actin-binding stretch occupies residues 760 to 774 (KFGHTKVFFKAGLLG). The 33-residue stretch at 781–813 (DEKLAQIITRTQAVCRGYLMRVEYQKMLLRRES) folds into the IQ domain. The stretch at 842–1937 (LLKSAETEKE…REVHTKISAE (1096 aa)) forms a coiled coil. Phosphoserine occurs at positions 1091 and 1095. Positions 1125–1171 (IEAERASRAKAEKQRSDLSRELEEISERLEEAGGATSAQVEMNKKRE) are disordered. Over residues 1127–1155 (AERASRAKAEKQRSDLSRELEEISERLEE) the composition is skewed to basic and acidic residues. Residues Ser1161 and Ser1236 each carry the phosphoserine modification. Phosphothreonine is present on Thr1254. The residue at position 1260 (Ser1260) is a Phosphoserine. A Phosphothreonine modification is found at Thr1285. 3 positions are modified to phosphoserine: Ser1291, Ser1302, and Ser1305. Phosphotyrosine is present on Tyr1463. Phosphothreonine is present on Thr1466. Tyr1491 carries the post-translational modification Phosphotyrosine. Phosphoserine is present on Ser1494. Phosphothreonine is present on Thr1500. Ser1513 carries the phosphoserine modification. At Thr1516 the chain carries Phosphothreonine. Residues Ser1553, Ser1573, Ser1602, Ser1713, and Ser1725 each carry the phosphoserine modification. The residue at position 1729 (Thr1729) is a Phosphothreonine. Residue Ser1738 is modified to Phosphoserine.

Belongs to the TRAFAC class myosin-kinesin ATPase superfamily. Myosin family. As to quaternary structure, muscle myosin is a hexameric protein that consists of 2 heavy chain subunits (MHC), 2 alkali light chain subunits (MLC) and 2 regulatory light chain subunits (MLC-2).

It is found in the cytoplasm. The protein localises to the myofibril. Muscle contraction. The sequence is that of Myosin-8 (Myh8) from Mus musculus (Mouse).